Here is a 215-residue protein sequence, read N- to C-terminus: N-(5'-phosphoribosyl)anthranilate isomerase (215 aa).

The protein belongs to the TrpF family.

It carries out the reaction N-(5-phospho-beta-D-ribosyl)anthranilate = 1-(2-carboxyphenylamino)-1-deoxy-D-ribulose 5-phosphate. The protein operates within amino-acid biosynthesis; L-tryptophan biosynthesis; L-tryptophan from chorismate: step 3/5. This is N-(5'-phosphoribosyl)anthranilate isomerase from Cellvibrio japonicus (strain Ueda107) (Pseudomonas fluorescens subsp. cellulosa).